We begin with the raw amino-acid sequence, 365 residues long: Heat-inducible transcription repressor HrcA (365 aa).

It belongs to the HrcA family.

In terms of biological role, negative regulator of class I heat shock genes (grpE-dnaK-dnaJ and groELS operons). Prevents heat-shock induction of these operons. The protein is Heat-inducible transcription repressor HrcA of Nodularia spumigena.